Here is a 399-residue protein sequence, read N- to C-terminus: Nicotinate phosphoribosyltransferase (399 aa).

His-217 carries the post-translational modification Phosphohistidine; by autocatalysis.

Belongs to the NAPRTase family. Transiently phosphorylated on a His residue during the reaction cycle. Phosphorylation strongly increases the affinity for substrates and increases the rate of nicotinate D-ribonucleotide production. Dephosphorylation regenerates the low-affinity form of the enzyme, leading to product release.

It catalyses the reaction nicotinate + 5-phospho-alpha-D-ribose 1-diphosphate + ATP + H2O = nicotinate beta-D-ribonucleotide + ADP + phosphate + diphosphate. Its pathway is cofactor biosynthesis; NAD(+) biosynthesis; nicotinate D-ribonucleotide from nicotinate: step 1/1. In terms of biological role, catalyzes the synthesis of beta-nicotinate D-ribonucleotide from nicotinate and 5-phospho-D-ribose 1-phosphate at the expense of ATP. The sequence is that of Nicotinate phosphoribosyltransferase from Burkholderia orbicola (strain MC0-3).